Consider the following 316-residue polypeptide: Acetaldehyde dehydrogenase 3 (316 aa).

An NAD(+)-binding site is contributed by 12-15 (SGNI). C132 functions as the Acyl-thioester intermediate in the catalytic mechanism. NAD(+) is bound by residues 163 to 171 (SAGPGTRAN) and N289.

Belongs to the acetaldehyde dehydrogenase family.

The catalysed reaction is acetaldehyde + NAD(+) + CoA = acetyl-CoA + NADH + H(+). The polypeptide is Acetaldehyde dehydrogenase 3 (mhpF) (Comamonas testosteroni (Pseudomonas testosteroni)).